A 437-amino-acid chain; its full sequence is Phosphoglucosamine mutase (437 aa).

Serine 101 (phosphoserine intermediate) is an active-site residue. Mg(2+) contacts are provided by serine 101, aspartate 234, aspartate 236, and aspartate 238. Serine 101 carries the post-translational modification Phosphoserine.

The protein belongs to the phosphohexose mutase family. Mg(2+) serves as cofactor. Post-translationally, activated by phosphorylation.

The catalysed reaction is alpha-D-glucosamine 1-phosphate = D-glucosamine 6-phosphate. Catalyzes the conversion of glucosamine-6-phosphate to glucosamine-1-phosphate. The protein is Phosphoglucosamine mutase of Thermus thermophilus (strain ATCC 27634 / DSM 579 / HB8).